A 1342-amino-acid polypeptide reads, in one-letter code: MVYSYTEKKRIRKDFGKRPQVLDVPYLLSIQLDSFQKFIEQDPEGQYGLEAAFRSVFPIQSYSGNSELQYVSYRLGEPVFDVQECQIRGVTYSAPLRVKLRLVIYEREAPEGTVKDIKEQEVYMGEIPLMTDNGTFVINGTERVIVSQLHRSPGVFFDSDKGKTHSSGKVLYNARIIPYRGSWLDFEFDPKDNLFVRIDRRRKLPATIILRALQYTTEQILDLFFEKVIFEIRDNKLQMELVPERLRGETASFDIEANGKVYVEKGRRITARHIRQLEKDDIKHIEVPVEYIAGKVASKDYVDESTGELICAANMELSLDLLAKLSQSGHKRIETLFTNDLDHGPYISETVRIDPTNDRLSALVEIYRMMRPGEPPTREAAESLFENLFFSEDRYDLSAVGRMKFNRSLLRDEIEGSGILSKDDIIDVMKKLIDIRNGKGEVDDIDHLGNRRIRSVGEMAENQFRVGLVRVERAVKERLSLGDLDTLMPQDMINAKPISAAVKEFFGSSQLSQFMDQNNPLSEITHKRRISALGPGGLTRERAGFEVRDVHPTHYGRVCPIETPEGPNIGLINSLSVYAQTNEYGFLETPYRKVTDGVVTDEIHYLSAIEEGNYVIAQANSNLDDEGHFVEDLVTCRSKGESSLFSRDQVDYMDVSTQQVVSVGASLIPFLEHDDANRALMGANMQRQAVPTLRADKPLVGTGMERAVAVDSGVTAVAKRGGTVQYVDASRIVIKVNEDEMYPGEAGIDIYNLTKYTRSNQNTCINQMPCVSLGEPVERGDVLADGPSTDLGELALGQNMRVAFMPWNGYNFEDSILVSERVVQEDRFTTIHIQELACVSRDTKLGPEEITADIPNVGEAALSKLDESGIVYIGAEVTGGDILVGKVTPKGETQLTPEEKLLRAIFGEKASDVKDSSLRVPNGVSGTVIDVQVFTRDGVEKDKRALEIEEMQLKQAKKDLSEELQILEAGLFSRIHAVLVSGGVEAEKLDKLPRDRWLELGLTDEEKQNQLEQLAEQYDELKHEFEKKLEAKRRKITQGDDLAPGVLKIVKVYLAVKRRIQPGDKMAGRHGNKGVISKINPIEDMPYDENGTPVDIVLNPLGVPSRMNIGQILETHLGMAAKGIGDKINAMLKQQQEVAKLREFIQRAYDLGADVRQKVDLNTFSDEEVLRLAENLRKGMPIATPVFDGAKEAEIKELLKLGDLPTSGQITLFDGRTGEQFERSVTVGYMYMLKLNHLVDDKMHARSTGSYSLVTQQPLGGKAQFGGQRFGEMEVWALEAYGAAYTLQEMLTVKSDDVNGRTKMYKNIVDGNHQMEPGMPESFNVLLKEIRSLGINIELEDE.

The protein belongs to the RNA polymerase beta chain family. As to quaternary structure, the RNAP catalytic core consists of 2 alpha, 1 beta, 1 beta' and 1 omega subunit. When a sigma factor is associated with the core the holoenzyme is formed, which can initiate transcription.

The enzyme catalyses RNA(n) + a ribonucleoside 5'-triphosphate = RNA(n+1) + diphosphate. DNA-dependent RNA polymerase catalyzes the transcription of DNA into RNA using the four ribonucleoside triphosphates as substrates. This chain is DNA-directed RNA polymerase subunit beta, found in Citrobacter koseri (strain ATCC BAA-895 / CDC 4225-83 / SGSC4696).